The primary structure comprises 341 residues: UDP-3-O-acylglucosamine N-acyltransferase (341 aa).

The active-site Proton acceptor is histidine 237.

This sequence belongs to the transferase hexapeptide repeat family. LpxD subfamily. In terms of assembly, homotrimer.

It catalyses the reaction a UDP-3-O-[(3R)-3-hydroxyacyl]-alpha-D-glucosamine + a (3R)-hydroxyacyl-[ACP] = a UDP-2-N,3-O-bis[(3R)-3-hydroxyacyl]-alpha-D-glucosamine + holo-[ACP] + H(+). It functions in the pathway bacterial outer membrane biogenesis; LPS lipid A biosynthesis. Functionally, catalyzes the N-acylation of UDP-3-O-acylglucosamine using 3-hydroxyacyl-ACP as the acyl donor. Is involved in the biosynthesis of lipid A, a phosphorylated glycolipid that anchors the lipopolysaccharide to the outer membrane of the cell. The polypeptide is UDP-3-O-acylglucosamine N-acyltransferase (Azoarcus sp. (strain BH72)).